Consider the following 311-residue polypeptide: Ketoisovalerate oxidoreductase subunit VorB (311 aa).

Heterotetramer of one alpha, one beta, one delta and one gamma chain.

The catalysed reaction is 3-methyl-2-oxobutanoate + 2 oxidized [2Fe-2S]-[ferredoxin] + CoA = 2-methylpropanoyl-CoA + 2 reduced [2Fe-2S]-[ferredoxin] + CO2 + H(+). The chain is Ketoisovalerate oxidoreductase subunit VorB (vorB) from Pyrococcus furiosus (strain ATCC 43587 / DSM 3638 / JCM 8422 / Vc1).